A 123-amino-acid polypeptide reads, in one-letter code: Large ribosomal subunit protein bL12 (123 aa).

Belongs to the bacterial ribosomal protein bL12 family. Homodimer. Part of the ribosomal stalk of the 50S ribosomal subunit. Forms a multimeric L10(L12)X complex, where L10 forms an elongated spine to which 2 to 4 L12 dimers bind in a sequential fashion. Binds GTP-bound translation factors.

Its function is as follows. Forms part of the ribosomal stalk which helps the ribosome interact with GTP-bound translation factors. Is thus essential for accurate translation. This Acholeplasma laidlawii (strain PG-8A) protein is Large ribosomal subunit protein bL12.